Consider the following 276-residue polypeptide: Hydroxyethylthiazole kinase (276 aa).

Substrate-binding residues include Met53 and Ala202.

Belongs to the Thz kinase family. It depends on Mg(2+) as a cofactor.

It carries out the reaction 5-(2-hydroxyethyl)-4-methylthiazole + ATP = 4-methyl-5-(2-phosphooxyethyl)-thiazole + ADP + H(+). It functions in the pathway cofactor biosynthesis; thiamine diphosphate biosynthesis; 4-methyl-5-(2-phosphoethyl)-thiazole from 5-(2-hydroxyethyl)-4-methylthiazole: step 1/1. Thiazole kinase involved in thiamine salvage pathway. The chain is Hydroxyethylthiazole kinase (THIM) from Arabidopsis thaliana (Mouse-ear cress).